The sequence spans 435 residues: Transmembrane protein 130 (435 aa).

A signal peptide spans 1 to 24; the sequence is MAQAVWSRLGRILWLACLLPWAPA. Residues 25–339 are Extracellular-facing; sequence GVAAGLYELN…IQVWPSRIQP (315 aa). Residues Asn-34, Asn-197, and Asn-300 are each glycosylated (N-linked (GlcNAc...) asparagine). Positions 147–233 constitute a PKD domain; that stretch reads WPSSYLTKTV…AVKQKTGDFS (87 aa). A helical membrane pass occupies residues 340–360; the sequence is AVFAFPCATLITVMLAFIMYM. Residues 361 to 435 lie on the Cytoplasmic side of the membrane; that stretch reads TLRNATQQKD…LYKSVKTYTV (75 aa).

It is found in the golgi apparatus membrane. This chain is Transmembrane protein 130 (TMEM130), found in Homo sapiens (Human).